The following is a 48-amino-acid chain: Large ribosomal subunit protein bL33 (48 aa).

Belongs to the bacterial ribosomal protein bL33 family.

The polypeptide is Large ribosomal subunit protein bL33 (Streptococcus mutans serotype c (strain ATCC 700610 / UA159)).